The primary structure comprises 384 residues: MTKRRVVVGMSGGVDSSVTAWLLKEQGYDVVGLFMKNWEDDDDGEYCSTRQDWIDVVSVADLIGIDVEAVNFAAEYKDRVFAEFLREYSAGRTPNPDVLCNAEIKFKAFLDHAMSLDAEMIATGHYARVRERDGRFELLKAFDHTKDQSYFLHRLNQAQLSKTMFPLGEIPKTKVREIAAQIGLPNAKKKDSTGICFIGERPFRDFLNRYLPTKPGPMKTPDGKVIGEHIGLAFYTFGQRKGIGLGGSKDGSGEPWFVAAKDIASNTLYVVQGHDHPWLLSRQLVAGNVSWVAGEPPADGFSCGAKTRYRQADAACSFGRADGERFSLAFDDAQWAVTPGQSAVLYDGEICLGGGIIEFAATGQPGQTAPAPAAGHTGALAEAR.

Residues 9–16 and Met-35 contribute to the ATP site; that span reads GMSGGVDS. An interaction with target base in tRNA region spans residues 95-97; it reads NPD. Cys-100 serves as the catalytic Nucleophile. Cys-100 and Cys-196 are disulfide-bonded. Gly-124 lines the ATP pocket. Residues 146–148 form an interaction with tRNA region; the sequence is KDQ. Residue Cys-196 is the Cysteine persulfide intermediate of the active site. The interval 308 to 309 is interaction with tRNA; it reads RY.

Belongs to the MnmA/TRMU family.

Its subcellular location is the cytoplasm. The enzyme catalyses S-sulfanyl-L-cysteinyl-[protein] + uridine(34) in tRNA + AH2 + ATP = 2-thiouridine(34) in tRNA + L-cysteinyl-[protein] + A + AMP + diphosphate + H(+). Catalyzes the 2-thiolation of uridine at the wobble position (U34) of tRNA, leading to the formation of s(2)U34. This chain is tRNA-specific 2-thiouridylase MnmA, found in Burkholderia ambifaria (strain ATCC BAA-244 / DSM 16087 / CCUG 44356 / LMG 19182 / AMMD) (Burkholderia cepacia (strain AMMD)).